The primary structure comprises 168 residues: Alpha-amylase/trypsin inhibitor CM3 (168 aa).

An N-terminal signal peptide occupies residues 1-25 (MACKSSCSLLLLAAVLLSVLAAASA).

The protein belongs to the protease inhibitor I6 (cereal trypsin/alpha-amylase inhibitor) family. Subunit of the tetrameric inhibitor. Five disulfide bonds, which are essential for the inhibitor activity, are probably present. As to expression, developing endosperm.

It localises to the secreted. Functionally, alpha-amylase/trypsin inhibitor. It could be involved in insect defense mechanisms. This is Alpha-amylase/trypsin inhibitor CM3 from Triticum aestivum (Wheat).